Consider the following 201-residue polypeptide: Large ribosomal subunit protein uL4 (201 aa).

The disordered stretch occupies residues 45 to 71; sequence AQKTRAEVTGSGKKPWRQKGTGRARAG.

The protein belongs to the universal ribosomal protein uL4 family. As to quaternary structure, part of the 50S ribosomal subunit.

One of the primary rRNA binding proteins, this protein initially binds near the 5'-end of the 23S rRNA. It is important during the early stages of 50S assembly. It makes multiple contacts with different domains of the 23S rRNA in the assembled 50S subunit and ribosome. Its function is as follows. Forms part of the polypeptide exit tunnel. In Shewanella halifaxensis (strain HAW-EB4), this protein is Large ribosomal subunit protein uL4.